A 131-amino-acid polypeptide reads, in one-letter code: ER membrane protein complex subunit 5 (131 aa).

Residues Met-1–Pro-3 are Cytoplasmic-facing. A helical membrane pass occupies residues Ser-4–Phe-22. Topologically, residues Ser-23–Ile-43 are lumenal. A helical membrane pass occupies residues Asp-44 to Ile-63. The Cytoplasmic segment spans residues Ala-64–Arg-131. Phosphoserine is present on Ser-120.

It belongs to the membrane magnesium transporter (TC 1.A.67) family. Component of the ER membrane protein complex (EMC). Abundant in heart muscle and kidney with lower levels in liver and brain and very little expression in intestine or colon. In kidney, highest levels in distal convoluted tubule.

The protein localises to the endoplasmic reticulum membrane. Its subcellular location is the golgi apparatus membrane. It localises to the early endosome membrane. Functionally, part of the endoplasmic reticulum membrane protein complex (EMC) that enables the energy-independent insertion into endoplasmic reticulum membranes of newly synthesized membrane proteins. Preferentially accommodates proteins with transmembrane domains that are weakly hydrophobic or contain destabilizing features such as charged and aromatic residues. Involved in the cotranslational insertion of multi-pass membrane proteins in which stop-transfer membrane-anchor sequences become ER membrane spanning helices. It is also required for the post-translational insertion of tail-anchored/TA proteins in endoplasmic reticulum membranes. By mediating the proper cotranslational insertion of N-terminal transmembrane domains in an N-exo topology, with translocated N-terminus in the lumen of the ER, controls the topology of multi-pass membrane proteins like the G protein-coupled receptors. By regulating the insertion of various proteins in membranes, it is indirectly involved in many cellular processes. May be involved Mg(2+) transport. The protein is ER membrane protein complex subunit 5 of Mus musculus (Mouse).